Consider the following 318-residue polypeptide: Protein-methionine-sulfoxide reductase catalytic subunit MsrP (318 aa).

Residues 1–40 (MNRFTRYDVTPEVIFNQRRQIIKAMGLGAAALSLPNIGFA) constitute a signal peptide (tat-type signal). Residues N72, 75 to 76 (YE), C130, T165, N217, R222, and 233 to 235 (SIK) each bind Mo-molybdopterin.

The protein belongs to the MsrP family. As to quaternary structure, heterodimer of a catalytic subunit (MsrP) and a heme-binding subunit (MsrQ). Requires Mo-molybdopterin as cofactor. Post-translationally, predicted to be exported by the Tat system. The position of the signal peptide cleavage has not been experimentally proven.

The protein localises to the periplasm. It carries out the reaction L-methionyl-[protein] + a quinone + H2O = L-methionyl-(S)-S-oxide-[protein] + a quinol. The catalysed reaction is L-methionyl-[protein] + a quinone + H2O = L-methionyl-(R)-S-oxide-[protein] + a quinol. Part of the MsrPQ system that repairs oxidized periplasmic proteins containing methionine sulfoxide residues (Met-O), using respiratory chain electrons. Thus protects these proteins from oxidative-stress damage caused by reactive species of oxygen and chlorine generated by the host defense mechanisms. MsrPQ is essential for the maintenance of envelope integrity under bleach stress, rescuing a wide series of structurally unrelated periplasmic proteins from methionine oxidation. The catalytic subunit MsrP is non-stereospecific, being able to reduce both (R-) and (S-) diastereoisomers of methionine sulfoxide. This chain is Protein-methionine-sulfoxide reductase catalytic subunit MsrP, found in Actinobacillus pleuropneumoniae serotype 3 (strain JL03).